A 280-amino-acid polypeptide reads, in one-letter code: Phosphate import ATP-binding protein PstB (280 aa).

An ABC transporter domain is found at 34-275; it reads IEVKNLNFFY…PARKETEDYI (242 aa). Residue 66-73 participates in ATP binding; sequence GPSGCGKS.

The protein belongs to the ABC transporter superfamily. Phosphate importer (TC 3.A.1.7) family. In terms of assembly, the complex is composed of two ATP-binding proteins (PstB), two transmembrane proteins (PstC and PstA) and a solute-binding protein (PstS).

It localises to the cell inner membrane. It catalyses the reaction phosphate(out) + ATP + H2O = ADP + 2 phosphate(in) + H(+). In terms of biological role, part of the ABC transporter complex PstSACB involved in phosphate import. Responsible for energy coupling to the transport system. The polypeptide is Phosphate import ATP-binding protein PstB (Burkholderia mallei (strain ATCC 23344)).